Reading from the N-terminus, the 467-residue chain is ATP synthase subunit beta (467 aa).

152 to 159 (GGAGVGKT) serves as a coordination point for ATP.

The protein belongs to the ATPase alpha/beta chains family. As to quaternary structure, F-type ATPases have 2 components, CF(1) - the catalytic core - and CF(0) - the membrane proton channel. CF(1) has five subunits: alpha(3), beta(3), gamma(1), delta(1), epsilon(1). CF(0) has three main subunits: a(1), b(2) and c(9-12). The alpha and beta chains form an alternating ring which encloses part of the gamma chain. CF(1) is attached to CF(0) by a central stalk formed by the gamma and epsilon chains, while a peripheral stalk is formed by the delta and b chains.

Its subcellular location is the cell inner membrane. It catalyses the reaction ATP + H2O + 4 H(+)(in) = ADP + phosphate + 5 H(+)(out). Its function is as follows. Produces ATP from ADP in the presence of a proton gradient across the membrane. The catalytic sites are hosted primarily by the beta subunits. The sequence is that of ATP synthase subunit beta from Wolinella succinogenes (strain ATCC 29543 / DSM 1740 / CCUG 13145 / JCM 31913 / LMG 7466 / NCTC 11488 / FDC 602W) (Vibrio succinogenes).